Here is a 111-residue protein sequence, read N- to C-terminus: Guanylate cyclase activator 2B (111 aa).

The first 26 residues, 1 to 26 (MGSRTLLGHLSVLAVVLLLLLQGTQS), serve as a signal peptide directing secretion. The propeptide occupies 27 to 96 (VDIKYQGYQV…SILQALRTMD (70 aa)). Intrachain disulfides connect Cys67–Cys80, Cys100–Cys108, and Cys103–Cys111.

Belongs to the guanylin family.

It localises to the secreted. Functionally, endogenous activator of intestinal guanylate cyclase. It stimulates this enzyme through the same receptor binding region as the heat-stable enterotoxins. May be a potent physiological regulator of intestinal fluid and electrolyte transport. May be an autocrine/paracrine regulator of intestinal salt and water transport. This Cavia porcellus (Guinea pig) protein is Guanylate cyclase activator 2B (GUCA2B).